The following is a 396-amino-acid chain: Putative isochorismate synthase (396 aa).

This sequence belongs to the isochorismate synthase family.

It catalyses the reaction chorismate = isochorismate. Its pathway is siderophore biosynthesis; amonabactin biosynthesis. Its function is as follows. Involved in the synthesis of amonabactin, a phenolate siderophore containing 2,3-dihydroxybenzoic acid (2,3-DHB). The chain is Putative isochorismate synthase (amoA) from Aeromonas hydrophila.